A 23-amino-acid polypeptide reads, in one-letter code: Dahlein-4.1 (23 aa).

In terms of tissue distribution, expressed by the skin dorsal glands.

Its subcellular location is the secreted. Its function is as follows. Has no antimicrobial activity. The protein is Dahlein-4.1 of Ranoidea dahlii (Dahl's aquatic frog).